The chain runs to 300 residues: Protoheme IX farnesyltransferase (300 aa).

The next 9 membrane-spanning stretches (helical) occupy residues 20–40 (ITKA…YLLG), 49–69 (WSVL…SNAY), 97–117 (VTAL…LYTI), 122–142 (AMFA…LKTV), 145–165 (LSVF…WVAA), 176–196 (LFLI…WFLY), 217–237 (ALQV…PVLG), 242–262 (LFIS…MLFY), and 278–298 (LMLV…VDKF).

This sequence belongs to the UbiA prenyltransferase family. Protoheme IX farnesyltransferase subfamily.

It localises to the cell inner membrane. The catalysed reaction is heme b + (2E,6E)-farnesyl diphosphate + H2O = Fe(II)-heme o + diphosphate. The protein operates within porphyrin-containing compound metabolism; heme O biosynthesis; heme O from protoheme: step 1/1. Functionally, converts heme B (protoheme IX) to heme O by substitution of the vinyl group on carbon 2 of heme B porphyrin ring with a hydroxyethyl farnesyl side group. The chain is Protoheme IX farnesyltransferase from Flavobacterium johnsoniae (strain ATCC 17061 / DSM 2064 / JCM 8514 / BCRC 14874 / CCUG 350202 / NBRC 14942 / NCIMB 11054 / UW101) (Cytophaga johnsonae).